A 239-amino-acid chain; its full sequence is Zinc finger protein 575 (239 aa).

Positions 1-62 (MLGGSVKSEV…PQRPHRCPDC (62 aa)) are disordered. The span at 22 to 31 (PETKAPHQDL) shows a compositional bias: basic and acidic residues. The segment covering 46–57 (RPRRRPPPQRPH) has biased composition (basic residues). 6 consecutive C2H2-type zinc fingers follow at residues 57–79 (HRCP…RLAH), 85–107 (HPCP…RLTH), 113–135 (HSCP…LWTH), 141–163 (YPCP…RHTH), 171–193 (YPCP…RLCH), and 207–230 (HRCS…RSHH).

Belongs to the krueppel C2H2-type zinc-finger protein family.

It localises to the nucleus. May be involved in transcriptional regulation. The chain is Zinc finger protein 575 (Znf575) from Mus musculus (Mouse).